The sequence spans 530 residues: Ubiquitin carboxyl-terminal hydrolase 17-like protein 1 (530 aa).

Residues 80 to 375 (AGLQNMGNTC…QAYVLFYIQK (296 aa)) form the USP domain. Residue Cys89 is the Nucleophile of the active site. His334 acts as the Proton acceptor in catalysis. Composition is skewed to basic and acidic residues over residues 382-392 (SESVSRGREPR) and 398-411 (DTDRRAKQGELKRD). The segment at 382 to 411 (SESVSRGREPRALGAEDTDRRAKQGELKRD) is disordered.

Belongs to the peptidase C19 family. USP17 subfamily.

The protein localises to the nucleus. It is found in the endoplasmic reticulum. It carries out the reaction Thiol-dependent hydrolysis of ester, thioester, amide, peptide and isopeptide bonds formed by the C-terminal Gly of ubiquitin (a 76-residue protein attached to proteins as an intracellular targeting signal).. Deubiquitinating enzyme that removes conjugated ubiquitin from specific proteins to regulate different cellular processes that may include cell proliferation, progression through the cell cycle, apoptosis, cell migration, and the cellular response to viral infection. The chain is Ubiquitin carboxyl-terminal hydrolase 17-like protein 1 (USP17L1) from Homo sapiens (Human).